The primary structure comprises 267 residues: MVALSNALSRVFGSVAGYKFPSFIQKSINALYVKIFKIDLSEFEPLENYKSLNALFMRSLKKERPFDKAPNICIAPCDALITECAFLDNDSALQIKGMPYKAHELVGEINPLSPSFFYVNFYLSPKDYHHYHAPCDLEILEARYFAGKLLPVNKPSLHKNKNLFVGNERVALVAKDIQGNKLYFVAVGALNVGKMRFNFDKNIQTNAKARFMQTYSYNPPIKVKKGDNLGNFEMGSTIVLFIQNTAFKDLKEKSVKFGESIGEFHAN.

Catalysis depends on charge relay system; for autoendoproteolytic cleavage activity residues aspartate 78, histidine 132, and serine 236. Catalysis depends on serine 236, which acts as the Schiff-base intermediate with substrate; via pyruvic acid; for decarboxylase activity. Serine 236 is subject to Pyruvic acid (Ser); by autocatalysis.

This sequence belongs to the phosphatidylserine decarboxylase family. PSD-B subfamily. Prokaryotic type I sub-subfamily. Heterodimer of a large membrane-associated beta subunit and a small pyruvoyl-containing alpha subunit. Pyruvate serves as cofactor. In terms of processing, is synthesized initially as an inactive proenzyme. Formation of the active enzyme involves a self-maturation process in which the active site pyruvoyl group is generated from an internal serine residue via an autocatalytic post-translational modification. Two non-identical subunits are generated from the proenzyme in this reaction, and the pyruvate is formed at the N-terminus of the alpha chain, which is derived from the carboxyl end of the proenzyme. The autoendoproteolytic cleavage occurs by a canonical serine protease mechanism, in which the side chain hydroxyl group of the serine supplies its oxygen atom to form the C-terminus of the beta chain, while the remainder of the serine residue undergoes an oxidative deamination to produce ammonia and the pyruvoyl prosthetic group on the alpha chain. During this reaction, the Ser that is part of the protease active site of the proenzyme becomes the pyruvoyl prosthetic group, which constitutes an essential element of the active site of the mature decarboxylase.

It is found in the cell membrane. It carries out the reaction a 1,2-diacyl-sn-glycero-3-phospho-L-serine + H(+) = a 1,2-diacyl-sn-glycero-3-phosphoethanolamine + CO2. It participates in phospholipid metabolism; phosphatidylethanolamine biosynthesis; phosphatidylethanolamine from CDP-diacylglycerol: step 2/2. In terms of biological role, catalyzes the formation of phosphatidylethanolamine (PtdEtn) from phosphatidylserine (PtdSer). This Helicobacter pylori (strain J99 / ATCC 700824) (Campylobacter pylori J99) protein is Phosphatidylserine decarboxylase proenzyme.